The sequence spans 283 residues: Non-selective voltage-gated ion channel VDAC3 (283 aa).

Cys-2 is subject to N-acetylcysteine. Thr-4 is subject to Phosphothreonine. An N6-acetyllysine mark is found at Lys-12, Lys-15, and Lys-20. 2 consecutive transmembrane segments (beta stranded) span residues 26–35 and 39–47; these read MVKIDLKTKS and VEFSTSGHA. Residues Lys-53 and Lys-61 each participate in a glycyl lysine isopeptide (Lys-Gly) (interchain with G-Cter in ubiquitin) cross-link. A run of 3 beta stranded transmembrane segments spans residues 54-64, 69-76, and 80-89; these read ASGNLETKYKV, LTFTQKWN, and TLGTEISWEN. Residue Lys-90 is modified to N6-acetyllysine. The chain crosses the membrane as a beta stranded span at residues 95-104; sequence LKLTLDTIFV. Glycyl lysine isopeptide (Lys-Gly) (interchain with G-Cter in ubiquitin) cross-links involve residues Lys-109 and Lys-110. 10 beta stranded membrane passes run 111–120, 123–130, 137–145, 150–158, 163–175, 178–185, 189–198, 202–211, 218–227, and 231–238; these read SGKLKASYKR, FSVGSNVD, TIYGWAVLA, LAGYQMSFD, KLSQ…GYKA, FQLHTHVN, EFGGSIYQKV, IETSINLAWT, RFGIAAKYML, and TSLSAKVN. Lys-163 participates in a covalent cross-link: Glycyl lysine isopeptide (Lys-Gly) (interchain with G-Cter in ubiquitin). Phosphoserine is present on Ser-241. NAD(+) is bound by residues 242-244 and 260-264; these read LIG and SALID. 2 beta stranded membrane-spanning segments follow: residues 242–251 and 254–263; these read LIGLGYTQTL and GVKLTLSALI. Lys-266 is subject to N6-acetyllysine; alternate. Lys-266 participates in a covalent cross-link: Glycyl lysine isopeptide (Lys-Gly) (interchain with G-Cter in ubiquitin); alternate. Residues 273–282 traverse the membrane as a beta stranded segment; the sequence is HKVGLGFELE. Lys-274 is covalently cross-linked (Glycyl lysine isopeptide (Lys-Gly) (interchain with G-Cter in ubiquitin)).

This sequence belongs to the eukaryotic mitochondrial porin family. In terms of assembly, interacts with ARMC12 in a TBC1D21-dependent manner. Interacts with MISFA. Ubiquitinated by PRKN during mitophagy, leading to its degradation and enhancement of mitophagy. Deubiquitinated by USP30. As to expression, expressed in erythrocytes (at protein level). Widely expressed. Highest in testis.

It is found in the mitochondrion outer membrane. The protein localises to the membrane. The catalysed reaction is chloride(in) = chloride(out). It carries out the reaction K(+)(in) = K(+)(out). In terms of biological role, non-selective voltage-gated ion channel that mediates the transport of anions and cations through the mitochondrion outer membrane and plasma membrane. Forms a high-conducting channel with a stable open state and a voltage-induced closure with a mild preference for anions over cations. Involved in male fertility and sperm mitochondrial sheath formation. This Homo sapiens (Human) protein is Non-selective voltage-gated ion channel VDAC3.